Reading from the N-terminus, the 320-residue chain is Probable cell division protein WhiA (320 aa).

Positions Thr-282 to Glu-315 form a DNA-binding region, H-T-H motif.

This sequence belongs to the WhiA family.

Its function is as follows. Involved in cell division and chromosome segregation. In Alkaliphilus oremlandii (strain OhILAs) (Clostridium oremlandii (strain OhILAs)), this protein is Probable cell division protein WhiA.